Here is an 87-residue protein sequence, read N- to C-terminus: Small ribosomal subunit protein eS21 (87 aa).

Belongs to the eukaryotic ribosomal protein eS21 family. In terms of assembly, component of the small ribosomal subunit (SSU). Mature N.crassa ribosomes consist of a small (40S) and a large (60S) subunit. The 40S small subunit contains 1 molecule of ribosomal RNA (18S rRNA) and at least 32 different proteins. The large 60S subunit contains 3 rRNA molecules (26S, 5.8S and 5S rRNA) and at least 42 different proteins.

It is found in the cytoplasm. Component of the ribosome, a large ribonucleoprotein complex responsible for the synthesis of proteins in the cell. The small ribosomal subunit (SSU) binds messenger RNAs (mRNAs) and translates the encoded message by selecting cognate aminoacyl-transfer RNA (tRNA) molecules. The large subunit (LSU) contains the ribosomal catalytic site termed the peptidyl transferase center (PTC), which catalyzes the formation of peptide bonds, thereby polymerizing the amino acids delivered by tRNAs into a polypeptide chain. The nascent polypeptides leave the ribosome through a tunnel in the LSU and interact with protein factors that function in enzymatic processing, targeting, and the membrane insertion of nascent chains at the exit of the ribosomal tunnel. This chain is Small ribosomal subunit protein eS21 (crp-7), found in Neurospora crassa (strain ATCC 24698 / 74-OR23-1A / CBS 708.71 / DSM 1257 / FGSC 987).